A 189-amino-acid polypeptide reads, in one-letter code: MTIKSDRWIRHMAQEHGMIEPFEPGQVRDTPEGQRVISYGTSSYGYDVRCGKDFKIFTDINSAVVDPKNFDAASFVDVHGDVCIIPPNSFALAYTLEYFRIPRNVLTICLGKSTYARCGIIVNVTPLEPEWEGRVTLEFSNTTPLPAKIHANEGVAQMLFFESDEPCEVSYADRGGKYMGQDGVTLPRS.

DCTP is bound by residues 112–117 (KSTYAR), 136–138 (TLE), glutamine 157, tyrosine 171, and glutamine 181. Glutamate 138 functions as the Proton donor/acceptor in the catalytic mechanism.

Belongs to the dCTP deaminase family. In terms of assembly, homotrimer.

The enzyme catalyses dCTP + H2O + H(+) = dUTP + NH4(+). Its pathway is pyrimidine metabolism; dUMP biosynthesis; dUMP from dCTP (dUTP route): step 1/2. In terms of biological role, catalyzes the deamination of dCTP to dUTP. This is dCTP deaminase from Halorhodospira halophila (strain DSM 244 / SL1) (Ectothiorhodospira halophila (strain DSM 244 / SL1)).